The following is a 283-amino-acid chain: Short-chain dehydrogenase anuB (283 aa).

NADP(+)-binding residues include Thr-57, Asp-78, Asn-106, Tyr-166, Lys-170, Val-199, and Thr-201. Catalysis depends on Tyr-166, which acts as the Proton acceptor. Tyr-166 functions as the Proton donor in the catalytic mechanism. The Lowers pKa of active site Tyr role is filled by Lys-170.

This sequence belongs to the short-chain dehydrogenases/reductases (SDR) family.

It participates in secondary metabolite biosynthesis. Highly reducing polyketide synthase; part of the gene cluster that mediates the biosynthesis of annullatin D, an alkylated aromatic polyketide with a fused dihydrobenzofuran lactone ring system that exhibits potent agonistic activities toward the cannabinoid receptors. The annullatin backbone 2-hydroxymethyl-3-pentylphenol is assembled from one acetyl-CoA starter unit and 5 malonyl-CoA elongation units by cooperation of the highly reducing polyketide synthase anuA, the short-chain dehydrogenase anuB and the oxidoreductase anuC, before being hydroxylated at the C-5 alkyl chain by the cytochrome P450 monooxygenase anuE to form (8S)-annullatin E. The prenyltransferase anuH subsequently installs one isoprenyl group at the benzene ring to form (8S)-annullatin J. Enzymatic or nonenzymatic dihydro-benzofuran ring formation between the prenyl and the phenolic hydroxyl groups in (8S)-annullatin J results in two diastereomers (2S,9S)-annullatin H and compound 12. The intermediate (2S,9S)-annullatin H is then converted to (2S,9S)-annullatin D by the FAD-linked oxidoreductase anuG-catalyzed five-member lactone ring formation. The isomer 12 acts as a substrate for the short-chain dehydrogenase anuF and is oxidized to (2R)-annullatin F, which is subsequently acetylated by an acetyltransferase leading to (2R)-annullatin G formation. The remaining enzymes identified within the cluster, anuD, anuI and anuJ, seem not to be involved in annullatin biosynthesis. This is Short-chain dehydrogenase anuB from Penicillium roqueforti (strain FM164).